Reading from the N-terminus, the 280-residue chain is Late embryogenesis abundant protein M17 (280 aa).

Positions 1–22 (MGNLKSLVLLALLFSFSVAVFA) are cleaved as a signal peptide. An N-linked (GlcNAc...) asparagine glycan is attached at Asn-23. Repeat copies occupy residues 76-97 (GGCRWGCCGGWWRGRCRYCCRS) and 131-152 (GGCRWGCCGGWWRGRCRYCCRS). The tract at residues 76 to 262 (GGCRWGCCGG…RGRCRYCCRS (187 aa)) is 4 X 22 AA repeats, Cys-rich. The disordered stretch occupies residues 163–184 (VEPNDVEPQQGGRGGGGGGGGG). The span at 173–184 (GGRGGGGGGGGG) shows a compositional bias: gly residues. Residues 186 to 207 (GGCRWGCCGGWWRGRCRYCCRS) form repeat 3. A disordered region spans residues 218–239 (VEPNDVEPQQGGRGGGGGGGGG). Gly residues predominate over residues 228 to 239 (GGRGGGGGGGGG). Copy 4 of the repeat occupies 241–262 (GGCRWGCCGGWWRGRCRYCCRS).

Functionally, may be involved in the acquisition of desiccation tolerance during late phase of embryogenesis. The sequence is that of Late embryogenesis abundant protein M17 from Arabidopsis thaliana (Mouse-ear cress).